Consider the following 655-residue polypeptide: p-hydroxybenzoic acid efflux pump subunit AaeB (655 aa).

Residues 1–12 (MGIFSIANQHIR) lie on the Periplasmic side of the membrane. The chain crosses the membrane as a helical span at residues 13-33 (FAVKLACAIVLALFIGFHFQL). The Cytoplasmic portion of the chain corresponds to 34-37 (ETPR). The helical transmembrane segment at 38-58 (WAVLTAAIVAAGPAFAAGGEP) threads the bilayer. Topologically, residues 59–68 (YSGAIRYRGM) are periplasmic. The helical transmembrane segment at 69–89 (LRIIGTFIGCIAALIIIISMI) threads the bilayer. Over 90–92 (RAP) the chain is Cytoplasmic. The chain crosses the membrane as a helical span at residues 93–113 (LLMILVCCVWAGFCTWISSLV). The Periplasmic portion of the chain corresponds to 114 to 120 (RIENSYA). The chain crosses the membrane as a helical span at residues 121 to 141 (WGLSGYTALIIVITIQTEPLL). The Cytoplasmic portion of the chain corresponds to 142–151 (TPQFALERCS). The chain crosses the membrane as a helical span at residues 152 to 172 (EIVIGIGCAILADLLFSPRSI). Topologically, residues 173 to 369 (KQEVDRELDC…RTTLSCILGT (197 aa)) are periplasmic. Residues 370 to 390 (LFWLWTGWTSGNGAMVMIAVV) form a helical membrane-spanning segment. At 391-406 (TSLAMRLPNPRMVCID) the chain is on the cytoplasmic side. Residues 407-427 (FIYGTLAALPLGLLYFLVIIP) traverse the membrane as a helical segment. The Periplasmic segment spans residues 428-430 (NTQ). Residues 431 to 451 (QSMLLLCLSLAVLGFFIGIEV) form a helical membrane-spanning segment. Residues 452–459 (QKRRLGSM) lie on the Cytoplasmic side of the membrane. The chain crosses the membrane as a helical span at residues 460-480 (GALASTINIIVLDNPMTFHFI). A topological domain (periplasmic) is located at residue Q481. Residues 482–502 (FLDSALGQIVGCMLAFIVILL) form a helical membrane-spanning segment. Residues 503-655 (VRDKSKDRTG…HKYQNALTDS (153 aa)) lie on the Cytoplasmic side of the membrane.

It belongs to the aromatic acid exporter ArAE (TC 2.A.85) family.

It is found in the cell inner membrane. Its function is as follows. Forms an efflux pump with AaeA. Could function as a metabolic relief valve, allowing to eliminate certain compounds when they accumulate to high levels in the cell. The polypeptide is p-hydroxybenzoic acid efflux pump subunit AaeB (Salmonella typhi).